The chain runs to 464 residues: tRNA modification GTPase MnmE (464 aa).

(6S)-5-formyl-5,6,7,8-tetrahydrofolate is bound by residues Arg23, Glu84, and Arg123. Positions 216 to 386 constitute a TrmE-type G domain; it reads GARATLVGRP…LGATVARLLL (171 aa). Residue Asn226 coordinates K(+). Residues 226 to 231, 245 to 251, and 270 to 273 each bind GTP; these read NAGKSS, TPIPGTT, and DTAG. Ser230 is a Mg(2+) binding site. 3 residues coordinate K(+): Thr245, Ile247, and Thr250. Thr251 lines the Mg(2+) pocket. Lys464 contacts (6S)-5-formyl-5,6,7,8-tetrahydrofolate.

Belongs to the TRAFAC class TrmE-Era-EngA-EngB-Septin-like GTPase superfamily. TrmE GTPase family. As to quaternary structure, homodimer. Heterotetramer of two MnmE and two MnmG subunits. K(+) is required as a cofactor.

Its subcellular location is the cytoplasm. In terms of biological role, exhibits a very high intrinsic GTPase hydrolysis rate. Involved in the addition of a carboxymethylaminomethyl (cmnm) group at the wobble position (U34) of certain tRNAs, forming tRNA-cmnm(5)s(2)U34. The protein is tRNA modification GTPase MnmE of Roseiflexus castenholzii (strain DSM 13941 / HLO8).